The following is a 385-amino-acid chain: Trans-enoyl reductase poxH (385 aa).

64–67 is a binding site for NADP(+); the sequence is QPYS. 156 to 163 contributes to the substrate binding site; it reads PDPAAPPI. NADP(+) is bound by residues 199–202, 223–226, Y241, and 289–290; these read STSV, SGTD, and LG. 309-313 is a substrate binding site; it reads HMAPL. 372–373 provides a ligand contact to NADP(+); it reads KR.

Belongs to the zinc-containing alcohol dehydrogenase family. As to quaternary structure, monomer.

It functions in the pathway secondary metabolite biosynthesis. Its function is as follows. Trans-enoyl reductase; part of the gene cluster that mediates the biosynthesis of oxaleimides, cytotoxic compounds containing an unusual disubstituted succinimide moiety. The first step of the pathway is provided by the HR-PKS poxF that serves in a new mode of collaborative biosynthesis with the PKS-NRPS poxE, by providing the olefin containing amino acid substrate via the synthesis of an ACP-bound dec-4-enoate. The cytochrome P450 monooxygenase poxM-catalyzed oxidation at the alpha-position creates the enzyme-bound 2-hydroxydec-4-enoyl-ACP thioester, which may be prone to spontaneous hydrolysis to yield 2-hydroxydec-4-enoic acid due to increased electrophilicity of the carbonyl. 2-hydroxydec-4-enoic acid can then be further oxidized by poxM to yield the alpha-ketoacid 2-oxodec-4-enoicacid, which is reductively aminated by the aminotransferase poxL to yield (S,E)-2-aminodec-4-enoic acid. The Hybrid PKS-NRPS synthetase poxE then performs condensation between the octaketide product of its PKS modules and the amino group of (S,E)-2-aminodec-4-enoic acid which is activated and incorporated by the adenylation domain. The resulting aminoacyl product can be cyclized by the Diels-Alderase PoxQ and reductively released by the reductive (R) domain of poxE to yield an aldehyde intermediate. The released aldehyde is then substrate for a Knoevenagel condensation by the hydrolyase poxO followed by an oxidation at the 5-position of the pyrrolidone ring. The presence of the olefin from the amino acid building block allows for migration of the substituted allyl group to occur. This allylic transposition reaction takes place in a conjugate addition, semipinacol-like fashion to yield a succinimide intermediate. Iterative two-electron oxidations of the C7 methyl of the succinimide intermediate to the carboxylic acid can be catalyzed by one of two remaining cytochrome P450 monooxygenasess poxC or poxD to yield oxaleimide A. Subsequent oxidation yields the maleimide scaffold oxaleimide I. Both oxaleimide A and oxaleimide I can undergo oxidative modifications in the decalin ring to yield the series of products oxaleimides B to H. This Penicillium oxalicum protein is Trans-enoyl reductase poxH.